We begin with the raw amino-acid sequence, 446 residues long: Aspartokinase (446 aa).

One can recognise an RPE1 insert domain in the interval 250–294 (IPLVKSTYMEESALNTKHSTKIDIPEDASGSTYKLPIELALQNRY).

It belongs to the aspartokinase family.

The enzyme catalyses L-aspartate + ATP = 4-phospho-L-aspartate + ADP. Its pathway is amino-acid biosynthesis; L-lysine biosynthesis via DAP pathway; (S)-tetrahydrodipicolinate from L-aspartate: step 1/4. The protein operates within amino-acid biosynthesis; L-methionine biosynthesis via de novo pathway; L-homoserine from L-aspartate: step 1/3. It functions in the pathway amino-acid biosynthesis; L-threonine biosynthesis; L-threonine from L-aspartate: step 1/5. This chain is Aspartokinase (lysC), found in Rickettsia prowazekii (strain Madrid E).